We begin with the raw amino-acid sequence, 680 residues long: 1-deoxy-D-xylulose-5-phosphate synthase (680 aa).

Thiamine diphosphate is bound by residues His-113 and 154–156 (GHS). Mg(2+) is bound at residue Asp-185. Thiamine diphosphate is bound by residues 186–187 (GA), Asn-214, Phe-323, and Glu-408. Asn-214 lines the Mg(2+) pocket.

Belongs to the transketolase family. DXPS subfamily. Homodimer. The cofactor is Mg(2+). Requires thiamine diphosphate as cofactor.

It catalyses the reaction D-glyceraldehyde 3-phosphate + pyruvate + H(+) = 1-deoxy-D-xylulose 5-phosphate + CO2. The protein operates within metabolic intermediate biosynthesis; 1-deoxy-D-xylulose 5-phosphate biosynthesis; 1-deoxy-D-xylulose 5-phosphate from D-glyceraldehyde 3-phosphate and pyruvate: step 1/1. Catalyzes the acyloin condensation reaction between C atoms 2 and 3 of pyruvate and glyceraldehyde 3-phosphate to yield 1-deoxy-D-xylulose-5-phosphate (DXP). In Psychrobacter arcticus (strain DSM 17307 / VKM B-2377 / 273-4), this protein is 1-deoxy-D-xylulose-5-phosphate synthase.